A 240-amino-acid chain; its full sequence is Protein unc-119 homolog A (240 aa).

The segment covering 1 to 12 has biased composition (gly residues); that stretch reads MKVKKGGGGTGP. The segment at 1 to 62 is disordered; it reads MKVKKGGGGT…PLQGKQPIGP (62 aa). Phosphoserine; by CK2 occurs at positions 37, 39, and 41. Tyr-131 serves as a coordination point for tetradecanoate.

This sequence belongs to the PDE6D/unc-119 family. Interacts with CABP4; in the absence of calcium. May interact with GTP-bound ARL1. Interacts with ARL2 and ARL3 (GTP-bound forms); this promotes the release of myristoylated cargo proteins. Found in a complex with ARL3, RP2 and UNC119; RP2 induces hydrolysis of GTP ARL3 in the complex, leading to the release of UNC119. Interacts with NPHP3 (when myristoylated). Interacts with CYS1 (when myristoylated). Interacts with MACIR; interaction only takes place when UNC119 is not liganded with myristoylated proteins. Interacts with ARL1 and ARL3 GTP-bound forms. Interacts with ARL2. Interacts with ARL2. Interacts with LCK; this interaction plays a crucial role in activation of LCK. Interacts with FYN. Interacts with RAB11A; in a cell cycle-dependent manner. Interacts with LYN (via SH2 and SH3 domains); leading to LYN activation. Interacts with DNM1; leading to a decrease of DNM1 GTPase activity. Found in a complex with ABL1, ABL2, CRK and UNC119; leading to the inhibition of CRK phosphorylation by ABL kinases. Interacts with CD44. Interacts with KLHL18 (via kelch repeats). Interacts with PPP3CA, PPP3CB and PPP3CC. Interacts with USP48; this interaction promotes UNC119 stability. In terms of processing, phosphorylation suppresses its interaction with KLHL18 and down-regulates its KLHL18-mediated degradation. Phosphorylated more under light conditions than dark conditions. Dephosphorylated by calcineurin.

The protein resides in the cytoplasm. It is found in the cytoskeleton. The protein localises to the microtubule organizing center. It localises to the centrosome. Its subcellular location is the spindle. The protein resides in the spindle pole. In terms of biological role, involved in synaptic functions in photoreceptor cells, the signal transduction in immune cells as a Src family kinase activator, endosome recycling, the uptake of bacteria and endocytosis, protein trafficking in sensory neurons and as lipid-binding chaperone with specificity for a diverse subset of myristoylated proteins. Specifically binds the myristoyl moiety of a subset of N-terminally myristoylated proteins and is required for their localization. Binds myristoylated GNAT1 and is required for G-protein localization and trafficking in sensory neurons. Probably plays a role in trafficking proteins in photoreceptor cells. Plays important roles in mediating Src family kinase signals for the completion of cytokinesis via RAB11A. This is Protein unc-119 homolog A (Unc119) from Rattus norvegicus (Rat).